Reading from the N-terminus, the 307-residue chain is Ribosomal RNA small subunit methyltransferase H (307 aa).

Residues 32–34 (GGH), D52, F78, D99, and Q106 each bind S-adenosyl-L-methionine.

It belongs to the methyltransferase superfamily. RsmH family.

It localises to the cytoplasm. The enzyme catalyses cytidine(1402) in 16S rRNA + S-adenosyl-L-methionine = N(4)-methylcytidine(1402) in 16S rRNA + S-adenosyl-L-homocysteine + H(+). Specifically methylates the N4 position of cytidine in position 1402 (C1402) of 16S rRNA. The protein is Ribosomal RNA small subunit methyltransferase H of Caldicellulosiruptor saccharolyticus (strain ATCC 43494 / DSM 8903 / Tp8T 6331).